We begin with the raw amino-acid sequence, 245 residues long: 8-amino-3,8-dideoxy-manno-octulosonate cytidylyltransferase (245 aa).

Belongs to the KdsB family.

It is found in the cytoplasm. The catalysed reaction is 8-amino-3,8-dideoxy-alpha-D-manno-octulosonate + CTP = CMP-8-amino-3,8-dideoxy-alpha-D-manno-oct-2-ulosonate + diphosphate. The protein operates within bacterial outer membrane biogenesis; lipopolysaccharide biosynthesis. In terms of biological role, activates KDO8N (a required 8-carbon sugar) for incorporation into bacterial lipopolysaccharide in the Shewanella genus. In Shewanella woodyi (strain ATCC 51908 / MS32), this protein is 8-amino-3,8-dideoxy-manno-octulosonate cytidylyltransferase.